The chain runs to 328 residues: Putative tyrosine-protein kinase C03B1.5 (328 aa).

In terms of domain architecture, Protein kinase spans 25 to 288; that stretch reads WSPALKIGSG…ALHASSQTYL (264 aa). Residues 31–39 and lysine 62 each bind ATP; that span reads IGSGAFGEV. Aspartate 155 acts as the Proton acceptor in catalysis.

Belongs to the protein kinase superfamily. Tyr protein kinase family.

It carries out the reaction L-tyrosyl-[protein] + ATP = O-phospho-L-tyrosyl-[protein] + ADP + H(+). This is Putative tyrosine-protein kinase C03B1.5 from Caenorhabditis elegans.